The primary structure comprises 288 residues: Pyruvate synthase subunit PorB (288 aa).

[4Fe-4S] cluster is bound by residues C16, C19, and C44. Positions 137 to 148 (STPYGASTTTSP) are enriched in polar residues. Residues 137–159 (STPYGASTTTSPHGKESFGEDRP) form a disordered region. Residues 149-159 (HGKESFGEDRP) are compositionally biased toward basic and acidic residues. [4Fe-4S] cluster is bound at residue C208.

As to quaternary structure, heterotetramer of one alpha, one beta, one delta and one gamma chain. [4Fe-4S] cluster serves as cofactor.

The enzyme catalyses 2 oxidized [2Fe-2S]-[ferredoxin] + pyruvate + CoA = 2 reduced [2Fe-2S]-[ferredoxin] + acetyl-CoA + CO2 + H(+). This is Pyruvate synthase subunit PorB (porB) from Methanothermobacter marburgensis (strain ATCC BAA-927 / DSM 2133 / JCM 14651 / NBRC 100331 / OCM 82 / Marburg) (Methanobacterium thermoautotrophicum).